The primary structure comprises 196 residues: GTP cyclohydrolase-2 (196 aa).

49–53 (RIHSE) lines the GTP pocket. 3 residues coordinate Zn(2+): Cys54, Cys65, and Cys67. Residues Gln70, 92 to 94 (EGR), and Thr114 contribute to the GTP site. Residue Asp126 is the Proton acceptor of the active site. The Nucleophile role is filled by Arg128. Residues Thr149 and Lys154 each contribute to the GTP site.

The protein belongs to the GTP cyclohydrolase II family. As to quaternary structure, homodimer. Requires Zn(2+) as cofactor.

The enzyme catalyses GTP + 4 H2O = 2,5-diamino-6-hydroxy-4-(5-phosphoribosylamino)-pyrimidine + formate + 2 phosphate + 3 H(+). It participates in cofactor biosynthesis; riboflavin biosynthesis; 5-amino-6-(D-ribitylamino)uracil from GTP: step 1/4. In terms of biological role, catalyzes the conversion of GTP to 2,5-diamino-6-ribosylamino-4(3H)-pyrimidinone 5'-phosphate (DARP), formate and pyrophosphate. This Buchnera aphidicola subsp. Schizaphis graminum (strain Sg) protein is GTP cyclohydrolase-2.